The sequence spans 359 residues: E3 ubiquitin-protein ligase RNF146 (359 aa).

Residues 38-76 (CAICLQTCVHPVSLPCKHVFCYLCVKGASWLGKRCALCR) form an RING-type zinc finger. Glycyl lysine isopeptide (Lys-Gly) (interchain with G-Cter in ubiquitin) cross-links involve residues K86 and K96. The WWE domain maps to 93-169 (EELKAASRGN…EHGRRRKIKR (77 aa)). Y109, R112, and W116 together coordinate a glycoprotein. K132 is covalently cross-linked (Glycyl lysine isopeptide (Lys-Gly) (interchain with G-Cter in ubiquitin)). 4 residues coordinate a glycoprotein: Y146, Q155, R165, and K177. K177 participates in a covalent cross-link: Glycyl lysine isopeptide (Lys-Gly) (interchain with G-Cter in ubiquitin). 2 disordered regions span residues 197–243 (SSAD…DAGI) and 261–359 (ERSH…VTEV). The segment covering 199–212 (ADGADSGSAQTGAS) has biased composition (low complexity). Positions 217–235 (VPSSTRPLTSVDGQLTSPV) are enriched in polar residues. The segment covering 284 to 298 (SVEETESDASSDSED) has biased composition (acidic residues). S290 and S294 each carry phosphoserine. Over residues 306–324 (HSLTQQRPLVPNGNQTVAD) the composition is skewed to polar residues.

As to quaternary structure, can form homooligomers. Interacts with PARsylated AXIN1, AXIN2, BLZF1, CASC3, H1-2, IPO7, LIG3, NCL, PARP1, XRCC1, XRCC5 and XRCC6. Interacts with DDB1, DHX15, IQGAP1, LRPPRC, PARP2, PRKDC, RUVBL2, TNKS1 and TNKS2. Binding often leads to interactor ubiquitination, in the presence of the appropriate E1 and E2 enzymes, and proteasomal degradation. Post-translationally, ubiquitinated; autoubiquitinated. Autoubiquitination is enhanced upon PAR-binding. As to expression, expressed at relatively high levels in the brain. Also present in spleen, heart, kidney, testis and liver. In the brain, expressed in the cerebellum, hippocampus, striatum, cortex, frontal cortex and, at lowest levels, in olfactory bulb (at protein level). Predominantly expressed in neurons.

The protein localises to the cytoplasm. It localises to the cytosol. The protein resides in the nucleus. It catalyses the reaction S-ubiquitinyl-[E2 ubiquitin-conjugating enzyme]-L-cysteine + [acceptor protein]-L-lysine = [E2 ubiquitin-conjugating enzyme]-L-cysteine + N(6)-ubiquitinyl-[acceptor protein]-L-lysine.. It functions in the pathway protein modification; protein ubiquitination. Functionally, E3 ubiquitin-protein ligase that specifically binds poly-ADP-ribosylated (PARsylated) proteins and mediates their ubiquitination and subsequent degradation. May regulate many important biological processes, such as cell survival and DNA damage response. Acts as an activator of the Wnt signaling pathway by mediating the ubiquitination of PARsylated AXIN1 and AXIN2, 2 key components of the beta-catenin destruction complex. Acts in cooperation with tankyrase proteins (TNKS and TNKS2), which mediate PARsylation of target proteins AXIN1, AXIN2, BLZF1, CASC3, TNKS and TNKS2. Recognizes and binds tankyrase-dependent PARsylated proteins via its WWE domain and mediates their ubiquitination, leading to their degradation. Different ubiquitin linkage types have been observed: TNKS2 undergoes ubiquitination at 'Lys-48' and 'Lys-63', while AXIN1 is only ubiquitinated at 'Lys-48'. May regulate TNKS and TNKS2 subcellular location, preventing aggregation at a centrosomal location. Neuroprotective protein. Protects the brain against N-methyl-D-aspartate (NMDA) receptor-mediated glutamate excitotoxicity and ischemia, by interfering with PAR-induced cell death, called parthanatos. Prevents nuclear translocation of AIFM1 in a PAR-binding dependent manner. Does not affect PARP1 activation. Protects against cell death induced by DNA damaging agents, such as N-methyl-N-nitro-N-nitrosoguanidine (MNNG) and rescues cells from G1 arrest. Promotes cell survival after gamma-irradiation. Facilitates DNA repair. This Mus musculus (Mouse) protein is E3 ubiquitin-protein ligase RNF146 (Rnf146).